Consider the following 139-residue polypeptide: ATP synthase epsilon chain, chloroplastic (139 aa).

This sequence belongs to the ATPase epsilon chain family. In terms of assembly, F-type ATPases have 2 components, CF(1) - the catalytic core - and CF(0) - the membrane proton channel. CF(1) has five subunits: alpha(3), beta(3), gamma(1), delta(1), epsilon(1). CF(0) has three main subunits: a, b and c.

The protein localises to the plastid. It is found in the chloroplast thylakoid membrane. Produces ATP from ADP in the presence of a proton gradient across the membrane. In Dictyota dichotoma, this protein is ATP synthase epsilon chain, chloroplastic.